The primary structure comprises 220 residues: Outer membrane protein assembly factor BamD (220 aa).

Residues 1-22 (MRLKHFKTFLFITMAIIVIGTG) form the signal peptide. Residue Cys-23 is the site of N-palmitoyl cysteine attachment. A lipid anchor (S-diacylglycerol cysteine) is attached at Cys-23.

The protein belongs to the BamD family. Part of the Bam complex.

The protein resides in the cell outer membrane. Part of the outer membrane protein assembly complex, which is involved in assembly and insertion of beta-barrel proteins into the outer membrane. This chain is Outer membrane protein assembly factor BamD, found in Helicobacter pylori (strain ATCC 700392 / 26695) (Campylobacter pylori).